Reading from the N-terminus, the 24-residue chain is Acidic phospholipase A2 4 (24 aa).

It belongs to the phospholipase A2 family. Group II subfamily. Requires Ca(2+) as cofactor. As to expression, expressed by the venom gland.

It is found in the secreted. The catalysed reaction is a 1,2-diacyl-sn-glycero-3-phosphocholine + H2O = a 1-acyl-sn-glycero-3-phosphocholine + a fatty acid + H(+). In terms of biological role, PLA2 catalyzes the calcium-dependent hydrolysis of the 2-acyl groups in 3-sn-phosphoglycerides. The polypeptide is Acidic phospholipase A2 4 (Trimeresurus stejnegeri (Chinese green tree viper)).